Consider the following 122-residue polypeptide: uncharacterized protein (122 aa).

It is found in the mitochondrion. This is an uncharacterized protein from Claviceps purpurea (Ergot fungus).